Reading from the N-terminus, the 103-residue chain is Toluene-4-monooxygenase system, effector component (103 aa).

Belongs to the TmoD/XamoD family. The alkene monooxygenase multicomponent enzyme system is composed of an electron transfer component and a monooxygenase component interacting with the effector protein TmoD. The electron transfer component is composed of a ferredoxin reductase (TmoF) and a ferredoxin (TmoC), and the monooxygenase component is formed by a heterohexamer (dimer of heterotrimers) of two alpha subunits (TmoA), two beta subunits (TmoE) and two gamma subunits (TmoB).

It functions in the pathway xenobiotic degradation; toluene degradation. In terms of biological role, effector component of the toluene-4-monooxygenase multicomponent enzyme system which catalyzes the O2- and NADH-dependent hydroxylation of toluene to form p-cresol. Required for optimal efficiency and specificity of the holoenzyme. This chain is Toluene-4-monooxygenase system, effector component, found in Ectopseudomonas mendocina (Pseudomonas mendocina).